A 336-amino-acid polypeptide reads, in one-letter code: Probable carboxylesterase 6 (336 aa).

Positions 1–20 (MGGTKLTHVTTTNPNNSNIH) are disordered. Over residues 7–19 (THVTTTNPNNSNI) the composition is skewed to polar residues. The Involved in the stabilization of the negatively charged intermediate by the formation of the oxyanion hole signature appears at 96–98 (HGG). Active-site residues include Ser176, Asp276, and His303.

The protein belongs to the 'GDXG' lipolytic enzyme family. Expressed in roots, leaves, flowers and siliques.

It catalyses the reaction a carboxylic ester + H2O = an alcohol + a carboxylate + H(+). Carboxylesterase acting on esters with varying acyl chain length. The sequence is that of Probable carboxylesterase 6 (CXE6) from Arabidopsis thaliana (Mouse-ear cress).